A 248-amino-acid chain; its full sequence is Deoxyribose-phosphate aldolase (248 aa).

Aspartate 117 acts as the Proton donor/acceptor in catalysis. Lysine 179 (schiff-base intermediate with acetaldehyde) is an active-site residue. Residue lysine 208 is the Proton donor/acceptor of the active site.

The protein belongs to the DeoC/FbaB aldolase family. DeoC type 1 subfamily.

It localises to the cytoplasm. The catalysed reaction is 2-deoxy-D-ribose 5-phosphate = D-glyceraldehyde 3-phosphate + acetaldehyde. The protein operates within carbohydrate degradation; 2-deoxy-D-ribose 1-phosphate degradation; D-glyceraldehyde 3-phosphate and acetaldehyde from 2-deoxy-alpha-D-ribose 1-phosphate: step 2/2. Catalyzes a reversible aldol reaction between acetaldehyde and D-glyceraldehyde 3-phosphate to generate 2-deoxy-D-ribose 5-phosphate. In Thermotoga sp. (strain RQ2), this protein is Deoxyribose-phosphate aldolase.